A 194-amino-acid chain; its full sequence is Holliday junction branch migration complex subunit RuvA (194 aa).

The interval 1-64 (MIAYIQGSIT…QDAHTLYGFS (64 aa)) is domain I. The domain II stretch occupies residues 65-143 (TIEEKQCFLQ…KVGNMLSLQP (79 aa)). The tract at residues 144-150 (SGQEAIY) is flexible linker. The interval 150–194 (YQEALAALSKLGIHKSTAEKTVAAILKEHQGEITVESLIKLALKG) is domain III.

Belongs to the RuvA family. Homotetramer. Forms an RuvA(8)-RuvB(12)-Holliday junction (HJ) complex. HJ DNA is sandwiched between 2 RuvA tetramers; dsDNA enters through RuvA and exits via RuvB. An RuvB hexamer assembles on each DNA strand where it exits the tetramer. Each RuvB hexamer is contacted by two RuvA subunits (via domain III) on 2 adjacent RuvB subunits; this complex drives branch migration. In the full resolvosome a probable DNA-RuvA(4)-RuvB(12)-RuvC(2) complex forms which resolves the HJ.

It localises to the cytoplasm. In terms of biological role, the RuvA-RuvB-RuvC complex processes Holliday junction (HJ) DNA during genetic recombination and DNA repair, while the RuvA-RuvB complex plays an important role in the rescue of blocked DNA replication forks via replication fork reversal (RFR). RuvA specifically binds to HJ cruciform DNA, conferring on it an open structure. The RuvB hexamer acts as an ATP-dependent pump, pulling dsDNA into and through the RuvAB complex. HJ branch migration allows RuvC to scan DNA until it finds its consensus sequence, where it cleaves and resolves the cruciform DNA. This chain is Holliday junction branch migration complex subunit RuvA, found in Amoebophilus asiaticus (strain 5a2).